Here is a 174-residue protein sequence, read N- to C-terminus: Crossover junction endodeoxyribonuclease RuvC (174 aa).

Residues aspartate 8, glutamate 67, and aspartate 139 contribute to the active site. Mg(2+)-binding residues include aspartate 8, glutamate 67, and aspartate 139.

This sequence belongs to the RuvC family. As to quaternary structure, homodimer which binds Holliday junction (HJ) DNA. The HJ becomes 2-fold symmetrical on binding to RuvC with unstacked arms; it has a different conformation from HJ DNA in complex with RuvA. In the full resolvosome a probable DNA-RuvA(4)-RuvB(12)-RuvC(2) complex forms which resolves the HJ. Requires Mg(2+) as cofactor.

The protein localises to the cytoplasm. It carries out the reaction Endonucleolytic cleavage at a junction such as a reciprocal single-stranded crossover between two homologous DNA duplexes (Holliday junction).. Its function is as follows. The RuvA-RuvB-RuvC complex processes Holliday junction (HJ) DNA during genetic recombination and DNA repair. Endonuclease that resolves HJ intermediates. Cleaves cruciform DNA by making single-stranded nicks across the HJ at symmetrical positions within the homologous arms, yielding a 5'-phosphate and a 3'-hydroxyl group; requires a central core of homology in the junction. The consensus cleavage sequence is 5'-(A/T)TT(C/G)-3'. Cleavage occurs on the 3'-side of the TT dinucleotide at the point of strand exchange. HJ branch migration catalyzed by RuvA-RuvB allows RuvC to scan DNA until it finds its consensus sequence, where it cleaves and resolves the cruciform DNA. This chain is Crossover junction endodeoxyribonuclease RuvC, found in Pseudomonas fluorescens (strain ATCC BAA-477 / NRRL B-23932 / Pf-5).